We begin with the raw amino-acid sequence, 250 residues long: Heat stress transcription factor C-1b (250 aa).

The stretch at 129-182 (EEGEEVRGTIEAVQRLREEQRGMEEELQAMDQRLRAAESRPGQMMAFLAKLADE) forms a coiled coil. Residues 144 to 180 (LREEQRGMEEELQAMDQRLRAAESRPGQMMAFLAKLA) form a hydrophobic repeat HR-A/B region. Positions 199 to 226 (AAGNNGSDPCKRRRIGADTGRGGVATGG) are disordered. The short motif at 209–212 (KRRR) is the Nuclear localization signal element.

Belongs to the HSF family. Class C subfamily. As to quaternary structure, homotrimer. Exhibits temperature-dependent phosphorylation.

It is found in the nucleus. Transcriptional regulator that specifically binds DNA of heat shock promoter elements (HSE). The sequence is that of Heat stress transcription factor C-1b (HSFC1B) from Oryza sativa subsp. japonica (Rice).